Consider the following 177-residue polypeptide: Nucleoside triphosphate/diphosphate phosphatase (177 aa).

Residue Arg23 is the Proton donor of the active site. Mg(2+)-binding residues include Asn87, Asp103, Asp105, Asp107, Asp120, and Glu123.

The protein belongs to the Ntdp family. Requires Mg(2+) as cofactor.

It carries out the reaction a ribonucleoside 5'-triphosphate + H2O = a ribonucleoside 5'-diphosphate + phosphate + H(+). The catalysed reaction is a ribonucleoside 5'-diphosphate + H2O = a ribonucleoside 5'-phosphate + phosphate + H(+). Has nucleoside phosphatase activity towards nucleoside triphosphates and nucleoside diphosphates. This chain is Nucleoside triphosphate/diphosphate phosphatase, found in Streptococcus mutans serotype c (strain ATCC 700610 / UA159).